The primary structure comprises 370 residues: Putative glutamate--cysteine ligase 2 (370 aa).

It belongs to the glutamate--cysteine ligase type 2 family. YbdK subfamily.

The catalysed reaction is L-cysteine + L-glutamate + ATP = gamma-L-glutamyl-L-cysteine + ADP + phosphate + H(+). Its function is as follows. ATP-dependent carboxylate-amine ligase which exhibits weak glutamate--cysteine ligase activity. The sequence is that of Putative glutamate--cysteine ligase 2 from Methylibium petroleiphilum (strain ATCC BAA-1232 / LMG 22953 / PM1).